Consider the following 157-residue polypeptide: Ribonuclease H (157 aa).

An RNase H type-1 domain is found at 1–146; sequence MPDLVAYTDG…ADELARAGMA (146 aa). Residues D9, E52, D74, and D138 each coordinate Mg(2+).

This sequence belongs to the RNase H family. As to quaternary structure, monomer. It depends on Mg(2+) as a cofactor.

It is found in the cytoplasm. The catalysed reaction is Endonucleolytic cleavage to 5'-phosphomonoester.. Endonuclease that specifically degrades the RNA of RNA-DNA hybrids. The protein is Ribonuclease H of Jannaschia sp. (strain CCS1).